A 282-amino-acid polypeptide reads, in one-letter code: Putative hydrolase BamMC406_5393 (282 aa).

Mg(2+) contacts are provided by Glu-124, Glu-126, and Asp-155.

The protein belongs to the FAH family. Mg(2+) is required as a cofactor.

This is Putative hydrolase BamMC406_5393 from Burkholderia ambifaria (strain MC40-6).